Consider the following 319-residue polypeptide: Ferrochelatase (319 aa).

Fe cation is bound by residues His-193 and Glu-274.

Belongs to the ferrochelatase family.

It localises to the cytoplasm. It carries out the reaction heme b + 2 H(+) = protoporphyrin IX + Fe(2+). It participates in porphyrin-containing compound metabolism; protoheme biosynthesis; protoheme from protoporphyrin-IX: step 1/1. Functionally, catalyzes the ferrous insertion into protoporphyrin IX. This is Ferrochelatase from Actinobacillus pleuropneumoniae serotype 3 (strain JL03).